Reading from the N-terminus, the 458-residue chain is UDP-N-acetylmuramoylalanine--D-glutamate ligase (458 aa).

Residue 124-130 (GSDGKTT) coordinates ATP.

The protein belongs to the MurCDEF family.

It is found in the cytoplasm. The enzyme catalyses UDP-N-acetyl-alpha-D-muramoyl-L-alanine + D-glutamate + ATP = UDP-N-acetyl-alpha-D-muramoyl-L-alanyl-D-glutamate + ADP + phosphate + H(+). Its pathway is cell wall biogenesis; peptidoglycan biosynthesis. Its function is as follows. Cell wall formation. Catalyzes the addition of glutamate to the nucleotide precursor UDP-N-acetylmuramoyl-L-alanine (UMA). This is UDP-N-acetylmuramoylalanine--D-glutamate ligase from Clostridium kluyveri (strain NBRC 12016).